The primary structure comprises 1164 residues: Phytochrome D (1164 aa).

Residues 1–55 form a disordered region; sequence MVSGGGSKTSGGEAASSGHRRSRHTSAAEQAQSSANKALRSQNQQPQNHGGGTES. Over residues 25 to 55 the composition is skewed to polar residues; sequence TSAAEQAQSSANKALRSQNQQPQNHGGGTES. One can recognise a GAF domain in the interval 255-437; the sequence is DIKLLCDTVV…AFGLQLNMEL (183 aa). Cysteine 360 lines the phytochromobilin pocket. 2 consecutive PAS domains span residues 656 to 727 and 790 to 861; these read VARE…LKGD and DYKA…MIVL. The region spanning 938–1157 is the Histidine kinase domain; that stretch reads YIFQVIKNPL…LIVIELPVPL (220 aa).

The protein belongs to the phytochrome family. Homodimer. In terms of processing, contains one covalently linked phytochromobilin chromophore.

Its function is as follows. Regulatory photoreceptor which exists in two forms that are reversibly interconvertible by light: the Pr form that absorbs maximally in the red region of the spectrum and the Pfr form that absorbs maximally in the far-red region. Photoconversion of Pr to Pfr induces an array of morphogenic responses, whereas reconversion of Pfr to Pr cancels the induction of those responses. Pfr controls the expression of a number of nuclear genes including those encoding the small subunit of ribulose-bisphosphate carboxylase, chlorophyll A/B binding protein, protochlorophyllide reductase, rRNA, etc. It also controls the expression of its own gene(s) in a negative feedback fashion. The polypeptide is Phytochrome D (PHYD) (Arabidopsis thaliana (Mouse-ear cress)).